Here is a 387-residue protein sequence, read N- to C-terminus: Probable NADH-dependent butanol dehydrogenase 1 (387 aa).

The protein belongs to the iron-containing alcohol dehydrogenase family.

The protein operates within alcohol metabolism; butanol biosynthesis. The sequence is that of Probable NADH-dependent butanol dehydrogenase 1 (yugJ) from Bacillus subtilis (strain 168).